The chain runs to 570 residues: Proline--tRNA ligase (570 aa).

The protein belongs to the class-II aminoacyl-tRNA synthetase family. ProS type 1 subfamily. As to quaternary structure, homodimer.

It is found in the cytoplasm. It catalyses the reaction tRNA(Pro) + L-proline + ATP = L-prolyl-tRNA(Pro) + AMP + diphosphate. Functionally, catalyzes the attachment of proline to tRNA(Pro) in a two-step reaction: proline is first activated by ATP to form Pro-AMP and then transferred to the acceptor end of tRNA(Pro). As ProRS can inadvertently accommodate and process non-cognate amino acids such as alanine and cysteine, to avoid such errors it has two additional distinct editing activities against alanine. One activity is designated as 'pretransfer' editing and involves the tRNA(Pro)-independent hydrolysis of activated Ala-AMP. The other activity is designated 'posttransfer' editing and involves deacylation of mischarged Ala-tRNA(Pro). The misacylated Cys-tRNA(Pro) is not edited by ProRS. The chain is Proline--tRNA ligase from Clostridium botulinum (strain Eklund 17B / Type B).